A 95-amino-acid polypeptide reads, in one-letter code: Aspartyl/glutamyl-tRNA(Asn/Gln) amidotransferase subunit C (95 aa).

Belongs to the GatC family. In terms of assembly, heterotrimer of A, B and C subunits.

It catalyses the reaction L-glutamyl-tRNA(Gln) + L-glutamine + ATP + H2O = L-glutaminyl-tRNA(Gln) + L-glutamate + ADP + phosphate + H(+). It carries out the reaction L-aspartyl-tRNA(Asn) + L-glutamine + ATP + H2O = L-asparaginyl-tRNA(Asn) + L-glutamate + ADP + phosphate + 2 H(+). Allows the formation of correctly charged Asn-tRNA(Asn) or Gln-tRNA(Gln) through the transamidation of misacylated Asp-tRNA(Asn) or Glu-tRNA(Gln) in organisms which lack either or both of asparaginyl-tRNA or glutaminyl-tRNA synthetases. The reaction takes place in the presence of glutamine and ATP through an activated phospho-Asp-tRNA(Asn) or phospho-Glu-tRNA(Gln). This chain is Aspartyl/glutamyl-tRNA(Asn/Gln) amidotransferase subunit C, found in Dinoroseobacter shibae (strain DSM 16493 / NCIMB 14021 / DFL 12).